We begin with the raw amino-acid sequence, 705 residues long: MKNTELSQKKKLDRQSRRKPAKSCHFCRVRKLKCDRVRPFCGSCSSRNRKQCEYKENTSAMEDQLRKKYRRCSKLEMARRIEELESQLTKQSQPNIHEGQNPLSNMRYLSSKHNRHILYGPTSYRAILATQTDTFAKYREEIWQVLKLSRNNWKREHHYSTLSEISSIETAPPHSGSPSVIEYLCESLPNYEVLCEYLTDFFASDFYDSYQIVHKEKVLRDLQDCFVKGPRSHKTGQHTIISLNLDSKKNYYKVGVMTAIMCLASHPKEVPEAIEVFHKVLTSFVSAKVFYTERVQFLFLRYLYINVAGLDGGDQSHCIFIHGLTIDTAIHMGLNEDLRRLYLSKNHPIEEIPYLERLWLWILFTDVKISLSTGIPVRINDDFVNKVRLENYSSSGDILLYKTTLRLRNIMKQIHAREKPPDIPLIIEDLKKFTIKMFKPLDFYLNASNLNGNEFTELQLWHATLHMIGSLSNLYTLTHQDFDARIFNFSVLAPLNSLHLCFNVLETYFELDNSKLSSKSLCLSKKWPHLNNALFLIYVNAFRALIQIYTIFLQYMENKDIQLFIQRNSSALTYSICPGDFEGPHNKCISLKIAFKEMENIFDHIHQEKLKPLTQIWQNSYYFSIIISMEKIGRRAFNKGMKNIDEGPETENDATENSLTTILNDLEGPLEDFSENFIDDILGSPSAFFDTAISGWSNFEDFFSR.

Residues 24 to 52 (CHFCRVRKLKCDRVRPFCGSCSSRNRKQC) constitute a DNA-binding region (zn(2)-C6 fungal-type).

Its subcellular location is the nucleus. This is an uncharacterized protein from Saccharomyces cerevisiae (strain ATCC 204508 / S288c) (Baker's yeast).